Reading from the N-terminus, the 686-residue chain is Translation initiation factor IF-2 (686 aa).

The disordered stretch occupies residues 35-99 (MSTVEDETAE…EHGQKDTDRR (65 aa)). The segment covering 50 to 68 (LQEEDKPEEKISKKEPDKK) has biased composition (basic and acidic residues). Positions 69-79 (DRKKTKGKKQM) are enriched in basic residues. Residues 87–99 (EGTEHGQKDTDRR) are compositionally biased toward basic and acidic residues. Residues 186–355 (LRPPIVTVMG…LLVAEMEELK (170 aa)) form the tr-type G domain. The G1 stretch occupies residues 195-202 (GHVDHGKT). A GTP-binding site is contributed by 195 to 202 (GHVDHGKT). The G2 stretch occupies residues 220–224 (GITQH). The interval 241 to 244 (DTPG) is G3. GTP-binding positions include 241–245 (DTPGH) and 295–298 (NKVD). Residues 295-298 (NKVD) are G4. A G5 region spans residues 331-333 (SAL).

It belongs to the TRAFAC class translation factor GTPase superfamily. Classic translation factor GTPase family. IF-2 subfamily.

Its subcellular location is the cytoplasm. Functionally, one of the essential components for the initiation of protein synthesis. Protects formylmethionyl-tRNA from spontaneous hydrolysis and promotes its binding to the 30S ribosomal subunits. Also involved in the hydrolysis of GTP during the formation of the 70S ribosomal complex. In Halothermothrix orenii (strain H 168 / OCM 544 / DSM 9562), this protein is Translation initiation factor IF-2.